The primary structure comprises 143 residues: Large ribosomal subunit protein uL11 (143 aa).

Belongs to the universal ribosomal protein uL11 family. As to quaternary structure, part of the ribosomal stalk of the 50S ribosomal subunit. Interacts with L10 and the large rRNA to form the base of the stalk. L10 forms an elongated spine to which L12 dimers bind in a sequential fashion forming a multimeric L10(L12)X complex. Post-translationally, one or more lysine residues are methylated.

Functionally, forms part of the ribosomal stalk which helps the ribosome interact with GTP-bound translation factors. In Delftia acidovorans (strain DSM 14801 / SPH-1), this protein is Large ribosomal subunit protein uL11.